Here is a 482-residue protein sequence, read N- to C-terminus: MKFIIKLFPEITIKSKSVRQRFIKILQGNIRNVLRRFDDDARVRMDWDKLIVSSRNDQFREQAIEALACIPGIQAFLEVQASKFTDLHDIFEQVKAVWGDQLEGKTFCVRAKRHGKHEFSSLEVERYVGGGLNQHCVSNGVRLKNPDVKINLEIDGEELFIVSAIHQGLSGMPIATQEDVLSLISGGFDSGVASFQFIKRGCRVHYCFFNLGGAAHEIGVKQVAYHLWNRFGSSHRVRFTAVDFEPVVAEILEKIDNGQMGVVLKRMMMRAAAKVADEFQIPALVTGECVGQVSSQTLTNLNVIDRVTDKVILRPLITWDKPDIISEARRIGTLEFAETMPEYCGVISKKPTVKAELSRIEAEEENFDFAILDKVVAEARYLDIRRIGEETAAEVQEVETTAESGDNEVILDIRSMDEHNEKPLLVEGREVMHIPFFKLTTAFGDLPKEKTYLLYCDRGVMSKLQALYLKEKGFANVKVYRP.

A THUMP domain is found at 61–165 (EQAIEALACI…GEELFIVSAI (105 aa)). Residues 183–184 (LI), Lys-265, Gly-287, and Gln-296 each bind ATP. Residues Cys-344 and Cys-456 are joined by a disulfide bond. The 79-residue stretch at 404 to 482 (SGDNEVILDI…GFANVKVYRP (79 aa)) folds into the Rhodanese domain. Cys-456 (cysteine persulfide intermediate) is an active-site residue.

This sequence belongs to the ThiI family.

The protein localises to the cytoplasm. It catalyses the reaction [ThiI sulfur-carrier protein]-S-sulfanyl-L-cysteine + a uridine in tRNA + 2 reduced [2Fe-2S]-[ferredoxin] + ATP + H(+) = [ThiI sulfur-carrier protein]-L-cysteine + a 4-thiouridine in tRNA + 2 oxidized [2Fe-2S]-[ferredoxin] + AMP + diphosphate. It carries out the reaction [ThiS sulfur-carrier protein]-C-terminal Gly-Gly-AMP + S-sulfanyl-L-cysteinyl-[cysteine desulfurase] + AH2 = [ThiS sulfur-carrier protein]-C-terminal-Gly-aminoethanethioate + L-cysteinyl-[cysteine desulfurase] + A + AMP + 2 H(+). The protein operates within cofactor biosynthesis; thiamine diphosphate biosynthesis. Catalyzes the ATP-dependent transfer of a sulfur to tRNA to produce 4-thiouridine in position 8 of tRNAs, which functions as a near-UV photosensor. Also catalyzes the transfer of sulfur to the sulfur carrier protein ThiS, forming ThiS-thiocarboxylate. This is a step in the synthesis of thiazole, in the thiamine biosynthesis pathway. The sulfur is donated as persulfide by IscS. The protein is tRNA sulfurtransferase of Aeromonas hydrophila subsp. hydrophila (strain ATCC 7966 / DSM 30187 / BCRC 13018 / CCUG 14551 / JCM 1027 / KCTC 2358 / NCIMB 9240 / NCTC 8049).